The sequence spans 401 residues: Tryptophan synthase beta chain (401 aa).

The residue at position 91 (K91) is an N6-(pyridoxal phosphate)lysine.

The protein belongs to the TrpB family. As to quaternary structure, tetramer of two alpha and two beta chains. Pyridoxal 5'-phosphate serves as cofactor.

The enzyme catalyses (1S,2R)-1-C-(indol-3-yl)glycerol 3-phosphate + L-serine = D-glyceraldehyde 3-phosphate + L-tryptophan + H2O. It participates in amino-acid biosynthesis; L-tryptophan biosynthesis; L-tryptophan from chorismate: step 5/5. The beta subunit is responsible for the synthesis of L-tryptophan from indole and L-serine. In Lactococcus lactis subsp. cremoris (strain MG1363), this protein is Tryptophan synthase beta chain.